The chain runs to 60 residues: MDHRLLEIIACPVCNGKLYYSQDKQELICKLDSLAFPLRDGIPVLLETEARALTVEESHS.

This sequence belongs to the UPF0434 family.

This Klebsiella pneumoniae (strain 342) protein is UPF0434 protein KPK_3615.